The sequence spans 25 residues: Ranatuerin-1C (25 aa).

Cys-19 and Cys-25 are oxidised to a cystine.

As to expression, expressed by the skin glands.

It localises to the secreted. Its function is as follows. Antibacterial activity against Gram-positive bacterium S.aureus (MIC=55 uM) and Gram-negative bacterium E.coli (MIC=1.5 uM). Has activity against C.albicans (MIC=58 uM). In Lithobates clamitans (Green frog), this protein is Ranatuerin-1C.